Consider the following 311-residue polypeptide: Methionyl-tRNA formyltransferase (311 aa).

110–113 (SLLP) contacts (6S)-5,6,7,8-tetrahydrofolate.

This sequence belongs to the Fmt family.

It catalyses the reaction L-methionyl-tRNA(fMet) + (6R)-10-formyltetrahydrofolate = N-formyl-L-methionyl-tRNA(fMet) + (6S)-5,6,7,8-tetrahydrofolate + H(+). Functionally, attaches a formyl group to the free amino group of methionyl-tRNA(fMet). The formyl group appears to play a dual role in the initiator identity of N-formylmethionyl-tRNA by promoting its recognition by IF2 and preventing the misappropriation of this tRNA by the elongation apparatus. The polypeptide is Methionyl-tRNA formyltransferase (Streptococcus pyogenes serotype M2 (strain MGAS10270)).